Consider the following 298-residue polypeptide: Olfactory receptor 52Z1P (298 aa).

Residues 1-14 (MGIPGLEGLHTWIS) lie on the Extracellular side of the membrane. A helical membrane pass occupies residues 15-35 (IPFSFMYIVAVAGNIFLIFLI). At 36 to 43 (MTERSLHE) the chain is on the cytoplasmic side. A helical transmembrane segment spans residues 44–64 (PMYLFLSMLASADFLLATAAA). At 65–85 (PKVLAILWFHSMDISFGSCVS) the chain is on the extracellular side. C83 and C164 are disulfide-bonded. Residues 86–106 (QMFFIHFIFVAESAILLAMAF) form a helical membrane-spanning segment. Residues 107–128 (DRYVAICYPLRYTILTSSAVRK) lie on the Cytoplasmic side of the membrane. The helical transmembrane segment at 129–149 (IGIAAVVRSFFICCPFIFLVY) threads the bilayer. Residues 150–178 (RLTYCGRNIIPHSYCEHIARLACGNINVN) are Extracellular-facing. A helical transmembrane segment spans residues 179–199 (IIYGLTVALLSTGLDIVLIII). Residues 200–223 (SYTMILHSVFQISSWAARFKALST) are Cytoplasmic-facing. A helical membrane pass occupies residues 224–244 (CGSHICVIFMFYTPAFFSFLA). The Extracellular segment spans residues 245–257 (HRFGGKTIPHHIH). The helical transmembrane segment at 258–278 (ILVGSLYVLVPPMLNPIIYGV) threads the bilayer. Topologically, residues 279 to 298 (KTKQIKDRVILLFSPISVCC) are cytoplasmic.

It belongs to the G-protein coupled receptor 1 family.

The protein localises to the cell membrane. Its function is as follows. Odorant receptor. This chain is Olfactory receptor 52Z1P, found in Homo sapiens (Human).